A 258-amino-acid chain; its full sequence is tRNA pseudouridine synthase A (258 aa).

Aspartate 53 serves as the catalytic Nucleophile. Tyrosine 111 provides a ligand contact to substrate.

This sequence belongs to the tRNA pseudouridine synthase TruA family. As to quaternary structure, homodimer.

The enzyme catalyses uridine(38/39/40) in tRNA = pseudouridine(38/39/40) in tRNA. Formation of pseudouridine at positions 38, 39 and 40 in the anticodon stem and loop of transfer RNAs. This chain is tRNA pseudouridine synthase A, found in Streptococcus agalactiae serotype V (strain ATCC BAA-611 / 2603 V/R).